Here is a 452-residue protein sequence, read N- to C-terminus: Probable 1,4-beta-D-glucan cellobiohydrolase A (452 aa).

The N-terminal stretch at 1–17 (MHQRALLFSALLTAVRA) is a signal peptide. The N-linked (GlcNAc...) asparagine glycan is linked to Asn62. Glu227 serves as the catalytic Nucleophile. The Proton donor role is filled by Glu232. N-linked (GlcNAc...) asparagine glycosylation is found at Asn285, Asn335, Asn402, and Asn445.

This sequence belongs to the glycosyl hydrolase 7 (cellulase C) family.

Its subcellular location is the secreted. The enzyme catalyses Hydrolysis of (1-&gt;4)-beta-D-glucosidic linkages in cellulose and cellotetraose, releasing cellobiose from the non-reducing ends of the chains.. The biological conversion of cellulose to glucose generally requires three types of hydrolytic enzymes: (1) Endoglucanases which cut internal beta-1,4-glucosidic bonds; (2) Exocellobiohydrolases that cut the disaccharide cellobiose from the non-reducing end of the cellulose polymer chain; (3) Beta-1,4-glucosidases which hydrolyze the cellobiose and other short cello-oligosaccharides to glucose. The protein is Probable 1,4-beta-D-glucan cellobiohydrolase A (cbhA) of Aspergillus niger (strain ATCC MYA-4892 / CBS 513.88 / FGSC A1513).